Reading from the N-terminus, the 426-residue chain is Probable indole-3-pyruvate monooxygenase YUCCA8 (426 aa).

Residue 29–34 (GAGPSG) participates in FAD binding. An NADP(+)-binding site is contributed by 199–204 (GCGNSG).

The protein belongs to the FMO family. FAD serves as cofactor. Expressed in root tips and in hydathodes. Expressed in root vasculature and quiescent center, but not in the meristematic zone of the root tip.

The catalysed reaction is indole-3-pyruvate + NADPH + O2 + H(+) = (indol-3-yl)acetate + CO2 + NADP(+) + H2O. It participates in plant hormone metabolism; auxin biosynthesis. In terms of biological role, involved in auxin biosynthesis. Belongs to the set of redundant YUCCA genes probably responsible for auxin biosynthesis in roots. In Arabidopsis thaliana (Mouse-ear cress), this protein is Probable indole-3-pyruvate monooxygenase YUCCA8 (YUC8).